The primary structure comprises 109 residues: Oncomodulin-2 (109 aa).

EF-hand domains follow at residues 39–74 (MSAS…FESG) and 78–109 (LTES…MVHS). Asp52, Asp54, Ser56, Tyr58, Glu63, Asp91, Asp93, Asp95, Lys97, and Glu102 together coordinate Ca(2+).

The protein belongs to the parvalbumin family.

The polypeptide is Oncomodulin-2 (OCM2) (Homo sapiens (Human)).